Here is a 20-residue protein sequence, read N- to C-terminus: Pregnancy-associated glycoprotein 61C (20 aa).

Belongs to the peptidase A1 family. N-glycosylated. As to expression, expressed in chorionic epithelium (trophectoderm).

It localises to the secreted. The protein resides in the extracellular space. The chain is Pregnancy-associated glycoprotein 61C from Bubalus bubalis (Domestic water buffalo).